Consider the following 160-residue polypeptide: Endoribonuclease YbeY (160 aa).

Zn(2+) is bound by residues H125, H129, and H135.

The protein belongs to the endoribonuclease YbeY family. The cofactor is Zn(2+).

The protein resides in the cytoplasm. Single strand-specific metallo-endoribonuclease involved in late-stage 70S ribosome quality control and in maturation of the 3' terminus of the 16S rRNA. The chain is Endoribonuclease YbeY from Dehalococcoides mccartyi (strain ATCC BAA-2100 / JCM 16839 / KCTC 5957 / BAV1).